A 468-amino-acid chain; its full sequence is Cysteine--tRNA ligase (468 aa).

C33 provides a ligand contact to Zn(2+). Positions 35 to 45 match the 'HIGH' region motif; the sequence is ATVQGLPHIGH. The Zn(2+) site is built by C211, H236, and E240. The 'KMSKS' region signature appears at 267–271; sequence KMSKS. K270 provides a ligand contact to ATP.

This sequence belongs to the class-I aminoacyl-tRNA synthetase family. As to quaternary structure, monomer. Zn(2+) is required as a cofactor.

It localises to the cytoplasm. The catalysed reaction is tRNA(Cys) + L-cysteine + ATP = L-cysteinyl-tRNA(Cys) + AMP + diphosphate. This is Cysteine--tRNA ligase from Mycolicibacterium paratuberculosis (strain ATCC BAA-968 / K-10) (Mycobacterium paratuberculosis).